Reading from the N-terminus, the 518-residue chain is Chaperonin GroEL (518 aa).

Residues 30 to 33, lysine 51, 87 to 91, and glycine 415 each bind ATP; these read TLGP and DGTTT.

This sequence belongs to the chaperonin (HSP60) family. As to quaternary structure, forms a cylinder of 14 subunits composed of two heptameric rings stacked back-to-back. Interacts with the co-chaperonin GroES.

Its subcellular location is the cytoplasm. The enzyme catalyses ATP + H2O + a folded polypeptide = ADP + phosphate + an unfolded polypeptide.. Functionally, together with its co-chaperonin GroES, plays an essential role in assisting protein folding. The GroEL-GroES system forms a nano-cage that allows encapsulation of the non-native substrate proteins and provides a physical environment optimized to promote and accelerate protein folding. This Desulfotalea psychrophila (strain LSv54 / DSM 12343) protein is Chaperonin GroEL.